A 354-amino-acid chain; its full sequence is NADH-quinone oxidoreductase subunit H (354 aa).

8 consecutive transmembrane segments (helical) span residues 22-42 (ILIR…YLIL), 91-111 (YLIA…VIPF), 124-144 (LLYV…AGWA), 168-188 (MGFA…SAIV), 203-223 (ILSW…ISGV), 255-275 (LFFL…ALMF), 291-311 (IPGF…FIWI), and 326-346 (LGWK…AIWI).

The protein belongs to the complex I subunit 1 family. NDH-1 is composed of 14 different subunits. Subunits NuoA, H, J, K, L, M, N constitute the membrane sector of the complex.

The protein localises to the cell inner membrane. The enzyme catalyses a quinone + NADH + 5 H(+)(in) = a quinol + NAD(+) + 4 H(+)(out). NDH-1 shuttles electrons from NADH, via FMN and iron-sulfur (Fe-S) centers, to quinones in the respiratory chain. The immediate electron acceptor for the enzyme in this species is believed to be ubiquinone. Couples the redox reaction to proton translocation (for every two electrons transferred, four hydrogen ions are translocated across the cytoplasmic membrane), and thus conserves the redox energy in a proton gradient. This subunit may bind ubiquinone. The chain is NADH-quinone oxidoreductase subunit H from Cupriavidus taiwanensis (strain DSM 17343 / BCRC 17206 / CCUG 44338 / CIP 107171 / LMG 19424 / R1) (Ralstonia taiwanensis (strain LMG 19424)).